The chain runs to 84 residues: MSGGSTGERPFSDIITSIRYWIIHSITIPALFVAGWLFVSTGLAYDIFGTPRPNEYFTQERQQVPLVNDRFSAKQELEDLTKGL.

A helical transmembrane segment spans residues 22 to 36; sequence IIHSITIPALFVAGW. His24 lines the heme pocket.

This sequence belongs to the PsbE/PsbF family. Heterodimer of an alpha subunit and a beta subunit. PSII is composed of 1 copy each of membrane proteins PsbA, PsbB, PsbC, PsbD, PsbE, PsbF, PsbH, PsbI, PsbJ, PsbK, PsbL, PsbM, PsbT, PsbX, PsbY, PsbZ, Psb30/Ycf12, at least 3 peripheral proteins of the oxygen-evolving complex and a large number of cofactors. It forms dimeric complexes. Requires heme b as cofactor.

The protein localises to the plastid. It is found in the chloroplast thylakoid membrane. Its function is as follows. This b-type cytochrome is tightly associated with the reaction center of photosystem II (PSII). PSII is a light-driven water:plastoquinone oxidoreductase that uses light energy to abstract electrons from H(2)O, generating O(2) and a proton gradient subsequently used for ATP formation. It consists of a core antenna complex that captures photons, and an electron transfer chain that converts photonic excitation into a charge separation. This chain is Cytochrome b559 subunit alpha, found in Guillardia theta (Cryptophyte).